Consider the following 508-residue polypeptide: Photosystem II CP47 reaction center protein (508 aa).

Helical transmembrane passes span 21-36, 101-115, 140-156, 203-218, 237-252, and 457-472; these read AVHIMHTALVSGWAGS, IILSGLLFLAAIWHW, GIHLFLSGLLCFGFGAF, IAAGILGILAGLFHLS, VLSSSIAAVFFAAFIV, and CFALLFFFGHIWHGAR.

This sequence belongs to the PsbB/PsbC family. PsbB subfamily. PSII is composed of 1 copy each of membrane proteins PsbA, PsbB, PsbC, PsbD, PsbE, PsbF, PsbH, PsbI, PsbJ, PsbK, PsbL, PsbM, PsbT, PsbX, PsbY, PsbZ, Psb30/Ycf12, at least 3 peripheral proteins of the oxygen-evolving complex and a large number of cofactors. It forms dimeric complexes. The cofactor is Binds multiple chlorophylls. PSII binds additional chlorophylls, carotenoids and specific lipids..

Its subcellular location is the plastid. It localises to the chloroplast thylakoid membrane. Functionally, one of the components of the core complex of photosystem II (PSII). It binds chlorophyll and helps catalyze the primary light-induced photochemical processes of PSII. PSII is a light-driven water:plastoquinone oxidoreductase, using light energy to abstract electrons from H(2)O, generating O(2) and a proton gradient subsequently used for ATP formation. This is Photosystem II CP47 reaction center protein from Chara vulgaris (Common stonewort).